Consider the following 319-residue polypeptide: Probable cytochrome c oxidase subunit 2 (319 aa).

The N-terminal stretch at 1-33 (MSPNGSDRSPRRPMRRKLLQALTAGLVLATATG) is a signal peptide. 2 helical membrane passes run 63-83 (WAAA…SVFF) and 101-121 (LPIE…LFYF). Positions 227, 262, 266, and 270 each coordinate Cu cation.

The protein belongs to the cytochrome c oxidase subunit 2 family. Cu cation serves as cofactor. Requires heme as cofactor.

The protein resides in the cell membrane. It carries out the reaction 4 Fe(II)-[cytochrome c] + O2 + 8 H(+)(in) = 4 Fe(III)-[cytochrome c] + 2 H2O + 4 H(+)(out). Functionally, subunits I and II form the functional core of the enzyme complex. Electrons originating in cytochrome c are transferred via heme a and Cu(A) to the binuclear center formed by heme a3 and Cu(B). This chain is Probable cytochrome c oxidase subunit 2 (ctaC), found in Streptomyces coelicolor (strain ATCC BAA-471 / A3(2) / M145).